We begin with the raw amino-acid sequence, 868 residues long: Translation initiation factor IF-2 (868 aa).

Basic and acidic residues-rich tracts occupy residues E156–S166 and S199–V209. Disordered regions lie at residues E156 to L177 and S199 to E269. Residues R249 to G260 show a composition bias toward basic residues. Residues G368 to K537 form the tr-type G domain. Residues G377–T384 are G1. Residue G377 to T384 participates in GTP binding. Residues G402 to H406 form a G2 region. Residues D423–G426 form a G3 region. GTP contacts are provided by residues D423–H427 and N477–D480. The G4 stretch occupies residues N477 to D480. Positions S513–K515 are G5.

Belongs to the TRAFAC class translation factor GTPase superfamily. Classic translation factor GTPase family. IF-2 subfamily.

The protein localises to the cytoplasm. Its function is as follows. One of the essential components for the initiation of protein synthesis. Protects formylmethionyl-tRNA from spontaneous hydrolysis and promotes its binding to the 30S ribosomal subunits. Also involved in the hydrolysis of GTP during the formation of the 70S ribosomal complex. This Legionella pneumophila subsp. pneumophila (strain Philadelphia 1 / ATCC 33152 / DSM 7513) protein is Translation initiation factor IF-2.